We begin with the raw amino-acid sequence, 635 residues long: Threonine--tRNA ligase (635 aa).

In terms of domain architecture, TGS spans 1 to 61; that stretch reads MIKITLKDGK…HKDSSLEILT (61 aa). The interval 242–532 is catalytic; that stretch reads DHRKLGKELD…LIEQYAGAFP (291 aa). Zn(2+)-binding residues include cysteine 333, histidine 384, and histidine 509.

The protein belongs to the class-II aminoacyl-tRNA synthetase family. In terms of assembly, homodimer. Zn(2+) serves as cofactor.

Its subcellular location is the cytoplasm. It catalyses the reaction tRNA(Thr) + L-threonine + ATP = L-threonyl-tRNA(Thr) + AMP + diphosphate + H(+). In terms of biological role, catalyzes the attachment of threonine to tRNA(Thr) in a two-step reaction: L-threonine is first activated by ATP to form Thr-AMP and then transferred to the acceptor end of tRNA(Thr). Also edits incorrectly charged L-seryl-tRNA(Thr). This Clostridium botulinum (strain Okra / Type B1) protein is Threonine--tRNA ligase.